The chain runs to 309 residues: HPr kinase/phosphorylase (309 aa).

Catalysis depends on residues histidine 138 and lysine 159. 153–160 is an ATP binding site; that stretch reads GQSGVGKS. Residue serine 160 coordinates Mg(2+). Aspartate 177 (proton acceptor; for phosphorylation activity. Proton donor; for dephosphorylation activity) is an active-site residue. The tract at residues 201–210 is important for the catalytic mechanism of both phosphorylation and dephosphorylation; that stretch reads LEIRGLGIIN. Glutamate 202 serves as a coordination point for Mg(2+). The active site involves arginine 243. Residues 264 to 269 form an important for the catalytic mechanism of dephosphorylation region; the sequence is PVRPGR.

The protein belongs to the HPrK/P family. Homohexamer. Requires Mg(2+) as cofactor.

It carries out the reaction [HPr protein]-L-serine + ATP = [HPr protein]-O-phospho-L-serine + ADP + H(+). The catalysed reaction is [HPr protein]-O-phospho-L-serine + phosphate + H(+) = [HPr protein]-L-serine + diphosphate. Catalyzes the ATP- as well as the pyrophosphate-dependent phosphorylation of a specific serine residue in HPr, a phosphocarrier protein of the phosphoenolpyruvate-dependent sugar phosphotransferase system (PTS). HprK/P also catalyzes the pyrophosphate-producing, inorganic phosphate-dependent dephosphorylation (phosphorolysis) of seryl-phosphorylated HPr (P-Ser-HPr). The two antagonistic activities of HprK/P are regulated by several intracellular metabolites, which change their concentration in response to the absence or presence of rapidly metabolisable carbon sources (glucose, fructose, etc.) in the growth medium. Also phosphorylates/dephosphorylates the HPr-like catabolite repression protein crh on a specific serine residue. Therefore, by controlling the phosphorylation state of HPr and crh, HPrK/P is a sensor enzyme that plays a major role in the regulation of carbon metabolism and sugar transport: it mediates carbon catabolite repression (CCR), and regulates PTS-catalyzed carbohydrate uptake and inducer exclusion. The polypeptide is HPr kinase/phosphorylase (Bacillus cytotoxicus (strain DSM 22905 / CIP 110041 / 391-98 / NVH 391-98)).